The primary structure comprises 448 residues: Protein giant (448 aa).

Disordered stretches follow at residues 23–47 (MHHH…LPVQ), 83–134 (QQHQ…ASPT), 238–259 (VEAT…RPFK), and 298–363 (IRSS…TSSS). Residues 30–47 (HHQQQPLHHLPHSQLPVQ) are compositionally biased toward low complexity. Residues 100 to 112 (DLSRRCDSVETPR) show a composition bias toward basic and acidic residues. Over residues 115–134 (PSPYQTSYSYGSGSPSASPT) the composition is skewed to low complexity. Residues 298–310 (IRSSNGGSRTVTN) show a composition bias toward polar residues. Low complexity predominate over residues 318–333 (SRSGSVNEGSSSNNNS). One can recognise a bZIP domain in the interval 384–447 (DAAYYERRRK…AAFTSAKVTT (64 aa)). The tract at residues 390–406 (RRRKNNAAAKKSRDRRR) is basic motif. The segment at 407-414 (IKEDEIAI) is leucine-zipper.

It belongs to the bZIP family. In terms of assembly, homodimer or heterodimer. Post-translationally, phosphorylated at multiple sites.

The protein localises to the nucleus. Represses the expression of both the krueppel and knirps segmentation gap genes. Binds, in vitro, to the krueppel regulatory elements CD1 and CD2. It is required in the early embryo for the development of portions of the head and abdomen. In Drosophila melanogaster (Fruit fly), this protein is Protein giant (gt).